A 98-amino-acid polypeptide reads, in one-letter code: UPF0213 protein LACR_2011 (98 aa).

Residues 2 to 79 form the GIY-YIG domain; it reads NTHFTYVLQC…KLVRQQKLKL (78 aa).

The protein belongs to the UPF0213 family.

The protein is UPF0213 protein LACR_2011 of Lactococcus lactis subsp. cremoris (strain SK11).